The following is a 272-amino-acid chain: Ribonuclease HII (272 aa).

The RNase H type-2 domain occupies 30-221 (GPVAGVDEVG…VRRAAEATGV (192 aa)). The a divalent metal cation site is built by Asp36, Glu37, and Asp130.

Belongs to the RNase HII family. It depends on Mn(2+) as a cofactor. Mg(2+) is required as a cofactor.

The protein resides in the cytoplasm. The enzyme catalyses Endonucleolytic cleavage to 5'-phosphomonoester.. Its function is as follows. Endonuclease that specifically degrades the RNA of RNA-DNA hybrids. This is Ribonuclease HII from Mycolicibacterium smegmatis (strain ATCC 700084 / mc(2)155) (Mycobacterium smegmatis).